Consider the following 483-residue polypeptide: Dual specificity protein phosphatase 10 (483 aa).

The Rhodanese domain occupies 169–286; sequence PSQGPVIIDC…FKQNHGNLCD (118 aa). Residues 200–216 are interaction with MAP kinases; sequence KISRRRLQQGKITVLDL. Residues 322-465 enclose the Tyrosine-protein phosphatase domain; that stretch reads ELTPILPFLF…LLEFEEDLNN (144 aa). Catalysis depends on C409, which acts as the Phosphocysteine intermediate.

It belongs to the protein-tyrosine phosphatase family. Non-receptor class dual specificity subfamily. In terms of assembly, monomer. Interacts with MAPK14.

It localises to the cytoplasm. The protein localises to the nucleus. The catalysed reaction is O-phospho-L-tyrosyl-[protein] + H2O = L-tyrosyl-[protein] + phosphate. The enzyme catalyses O-phospho-L-seryl-[protein] + H2O = L-seryl-[protein] + phosphate. It catalyses the reaction O-phospho-L-threonyl-[protein] + H2O = L-threonyl-[protein] + phosphate. Its function is as follows. Protein phosphatase involved in the inactivation of MAP kinases. Has a specificity for the MAPK11/MAPK12/MAPK13/MAPK14 subfamily. It preferably dephosphorylates p38. This is Dual specificity protein phosphatase 10 (Dusp10) from Mus musculus (Mouse).